The primary structure comprises 413 residues: Serine hydroxymethyltransferase (413 aa).

(6S)-5,6,7,8-tetrahydrofolate contacts are provided by residues leucine 117 and 121-123; that span reads GHL. Lysine 226 bears the N6-(pyridoxal phosphate)lysine mark. (6S)-5,6,7,8-tetrahydrofolate-binding positions include glutamate 239 and 349–351; that span reads SPF.

This sequence belongs to the SHMT family. In terms of assembly, homodimer. Pyridoxal 5'-phosphate serves as cofactor.

The protein resides in the cytoplasm. The enzyme catalyses (6R)-5,10-methylene-5,6,7,8-tetrahydrofolate + glycine + H2O = (6S)-5,6,7,8-tetrahydrofolate + L-serine. It functions in the pathway one-carbon metabolism; tetrahydrofolate interconversion. Its pathway is amino-acid biosynthesis; glycine biosynthesis; glycine from L-serine: step 1/1. In terms of biological role, catalyzes the reversible interconversion of serine and glycine with tetrahydrofolate (THF) serving as the one-carbon carrier. This reaction serves as the major source of one-carbon groups required for the biosynthesis of purines, thymidylate, methionine, and other important biomolecules. Also exhibits THF-independent aldolase activity toward beta-hydroxyamino acids, producing glycine and aldehydes, via a retro-aldol mechanism. The chain is Serine hydroxymethyltransferase from Bacillus cereus (strain AH820).